Here is a 288-residue protein sequence, read N- to C-terminus: Acetyl-coenzyme A carboxylase carboxyl transferase subunit beta (288 aa).

Positions 34 to 288 constitute a CoA carboxyltransferase N-terminal domain; it reads LFAKCPACKH…HLVAFHGGVS (255 aa). Zn(2+) is bound by residues cysteine 38, cysteine 41, cysteine 56, and cysteine 59. A C4-type zinc finger spans residues 38-59; that stretch reads CPACKHMIYQKDLGPAKICPTC.

The protein belongs to the AccD/PCCB family. Acetyl-CoA carboxylase is a heterohexamer composed of biotin carboxyl carrier protein (AccB), biotin carboxylase (AccC) and two subunits each of ACCase subunit alpha (AccA) and ACCase subunit beta (AccD). Requires Zn(2+) as cofactor.

The protein localises to the cytoplasm. It catalyses the reaction N(6)-carboxybiotinyl-L-lysyl-[protein] + acetyl-CoA = N(6)-biotinyl-L-lysyl-[protein] + malonyl-CoA. It functions in the pathway lipid metabolism; malonyl-CoA biosynthesis; malonyl-CoA from acetyl-CoA: step 1/1. In terms of biological role, component of the acetyl coenzyme A carboxylase (ACC) complex. Biotin carboxylase (BC) catalyzes the carboxylation of biotin on its carrier protein (BCCP) and then the CO(2) group is transferred by the transcarboxylase to acetyl-CoA to form malonyl-CoA. The protein is Acetyl-coenzyme A carboxylase carboxyl transferase subunit beta of Streptococcus equi subsp. equi (strain 4047).